A 515-amino-acid polypeptide reads, in one-letter code: Protein disulfide-isomerase (515 aa).

Positions 1 to 20 (MRSFAPWLVSLLGASAVVAA) are cleaved as a signal peptide. Thioredoxin domains follow at residues 21-132 (ADTE…QSLP) and 339-470 (VLDG…ENGK). Active-site nucleophile residues include Cys-54, Cys-57, Cys-389, and Cys-392. 2 disulfides stabilise this stretch: Cys-54/Cys-57 and Cys-389/Cys-392. The interval 478–515 (VASEETQEGGDVTEAAPSATEAETPAATDDEKAEHDEL) is disordered. Over residues 490-504 (TEAAPSATEAETPAA) the composition is skewed to low complexity. The span at 506–515 (DDEKAEHDEL) shows a compositional bias: basic and acidic residues. A Prevents secretion from ER motif is present at residues 512-515 (HDEL).

This sequence belongs to the protein disulfide isomerase family.

It is found in the endoplasmic reticulum lumen. The enzyme catalyses Catalyzes the rearrangement of -S-S- bonds in proteins.. Functionally, participates in the folding of proteins containing disulfide bonds, may be involved in glycosylation, prolyl hydroxylation and triglyceride transfer. In Aspergillus niger, this protein is Protein disulfide-isomerase (pdiA).